Consider the following 78-residue polypeptide: ATP synthase subunit c (78 aa).

2 consecutive transmembrane segments (helical) span residues 9 to 29 (AFIG…GQGW) and 56 to 76 (AAVT…LVFV).

Belongs to the ATPase C chain family. F-type ATPases have 2 components, F(1) - the catalytic core - and F(0) - the membrane proton channel. F(1) has five subunits: alpha(3), beta(3), gamma(1), delta(1), epsilon(1). F(0) has three main subunits: a(1), b(2) and c(10-14). The alpha and beta chains form an alternating ring which encloses part of the gamma chain. F(1) is attached to F(0) by a central stalk formed by the gamma and epsilon chains, while a peripheral stalk is formed by the delta and b chains.

The protein localises to the cell membrane. In terms of biological role, f(1)F(0) ATP synthase produces ATP from ADP in the presence of a proton or sodium gradient. F-type ATPases consist of two structural domains, F(1) containing the extramembraneous catalytic core and F(0) containing the membrane proton channel, linked together by a central stalk and a peripheral stalk. During catalysis, ATP synthesis in the catalytic domain of F(1) is coupled via a rotary mechanism of the central stalk subunits to proton translocation. Functionally, key component of the F(0) channel; it plays a direct role in translocation across the membrane. A homomeric c-ring of between 10-14 subunits forms the central stalk rotor element with the F(1) delta and epsilon subunits. This is ATP synthase subunit c from Malacoplasma penetrans (strain HF-2) (Mycoplasma penetrans).